The primary structure comprises 637 residues: Pentatricopeptide repeat-containing protein At1g12300, mitochondrial (637 aa).

Residues 1-95 (MVKLMIRRLS…PTVIDFSRLF (95 aa)) constitute a mitochondrion transit peptide. 15 PPR repeats span residues 87–121 (TVID…GIAH), 122–156 (NLYT…GYEP), 157–191 (NTIT…GHKP), 192–226 (DLIT…GCQP), 227–261 (NAVT…NIKL), 262–296 (DAVK…GITT), 297–331 (NIIT…KINP), 332–366 (NVVT…GIAP), 367–401 (DTIT…GCDP), 402–436 (NIRT…GVVA), 437–471 (DTVT…KVPP), 472–506 (NIVT…KMEL), 507–541 (DIGI…GVKP), 542–576 (GVKT…GHAP), and 577–611 (DGWT…GFSV).

The protein belongs to the PPR family. P subfamily.

The protein localises to the mitochondrion. The protein is Pentatricopeptide repeat-containing protein At1g12300, mitochondrial of Arabidopsis thaliana (Mouse-ear cress).